The following is a 119-amino-acid chain: Small ribosomal subunit protein uS10 (119 aa).

Belongs to the universal ribosomal protein uS10 family. As to quaternary structure, component of the 40S small ribosomal subunit.

It localises to the cytoplasm. In terms of biological role, component of the small ribosomal subunit. The ribosome is a large ribonucleoprotein complex responsible for the synthesis of proteins in the cell. The sequence is that of Small ribosomal subunit protein uS10 (rps20) from Xenopus laevis (African clawed frog).